The primary structure comprises 166 residues: Endoribonuclease YbeY (166 aa).

Positions 111, 115, and 121 each coordinate Zn(2+). Residues 141-166 form a disordered region; sequence LGYPDPYADDESADHPHSDTPSKDHE. The span at 153 to 166 shows a compositional bias: basic and acidic residues; that stretch reads ADHPHSDTPSKDHE.

This sequence belongs to the endoribonuclease YbeY family. Zn(2+) serves as cofactor.

The protein resides in the cytoplasm. Functionally, single strand-specific metallo-endoribonuclease involved in late-stage 70S ribosome quality control and in maturation of the 3' terminus of the 16S rRNA. The protein is Endoribonuclease YbeY of Pseudomonas syringae pv. tomato (strain ATCC BAA-871 / DC3000).